The following is an 808-amino-acid chain: Phospholipase D alpha 1 (808 aa).

The C2 domain occupies methionine 1–valine 125. Aspartate 186 contributes to the Ca(2+) binding site. One can recognise a PLD phosphodiesterase 1 domain in the interval threonine 326–arginine 364. Active-site residues include histidine 331, lysine 333, and aspartate 338. An a 1,2-diacyl-sn-glycero-3-phosphate-binding site is contributed by histidine 331. Ca(2+) contacts are provided by histidine 370 and histidine 404. Residues phenylalanine 654–serine 681 enclose the PLD phosphodiesterase 2 domain. Active-site residues include histidine 659, lysine 661, and aspartate 666. Histidine 659 provides a ligand contact to a 1,2-diacyl-sn-glycero-3-phosphate. Glutamate 720 provides a ligand contact to Ca(2+).

Belongs to the phospholipase D family. C2-PLD subfamily. Ca(2+) serves as cofactor.

The catalysed reaction is a 1,2-diacyl-sn-glycero-3-phosphocholine + H2O = a 1,2-diacyl-sn-glycero-3-phosphate + choline + H(+). In terms of biological role, hydrolyzes glycerol-phospholipids at the terminal phosphodiesteric bond. Plays an important role in various cellular processes. The protein is Phospholipase D alpha 1 (PLD1) of Spuriopimpinella brachycarpa (Chamnamul).